A 574-amino-acid chain; its full sequence is Regulatory protein NPR4 (574 aa).

Residues M1–N21 are disordered. Low complexity predominate over residues S9–S20. At S11 the chain carries Phosphoserine. The 77-residue stretch at T54–P130 folds into the BTB domain. The C2HC NPR-type zinc-finger motif lies at V133–K147. Zn(2+) is bound by residues C136, C141, H143, and C146. ANK repeat units follow at residues E252 to L280, D281 to F311, and R315 to D344. Positions E373 to P516 are salicylic acid-binding core (SBC). Residue R419 coordinates salicylate. The disordered stretch occupies residues P521–T574. Positions R535–A553 are enriched in basic and acidic residues. The segment covering R554–R567 has biased composition (low complexity).

This sequence belongs to the plant 'ANKYRIN-BTB/POZ' family. 'NPR1-like' subfamily. Forms homodimers, homotetramers and heterodimers with NPR3 in the presence of salicylic acid (SA). Interacts with TGA2, TGA3, TGA5, TGA6 and TGA7. Interacts with CUL3A, a core component of the cullin-RING ubiquitin ligases (CRL). Binds to NPR1; this interaction is disrupted by association with SA, probably due to conformational changes.

The protein localises to the nucleus. The protein operates within protein modification; protein ubiquitination. Functionally, salicylic acid (SA)-binding substrate-specific adapter of an E3 ubiquitin-protein ligase complex (CUL3-RBX1-BTB) which mediates the ubiquitination and subsequent proteasomal degradation of NPR1 in the absence of SA. Together with NPR3, acts as receptor of salicylic acid to monitor immunity in a NPR1-dependent manner and induce systemic acquired resistance (SAR). Involved in the regulation of basal defense responses against pathogens, and may be implicated in the cross-talk between the SA- and JA-dependent signaling pathways. The polypeptide is Regulatory protein NPR4 (Arabidopsis thaliana (Mouse-ear cress)).